The sequence spans 210 residues: Molybdenum cofactor guanylyltransferase (210 aa).

GTP-binding positions include 9 to 11 (LAG), K21, D66, and D95. D95 provides a ligand contact to Mg(2+).

The protein belongs to the MobA family. In terms of assembly, monomer. It depends on Mg(2+) as a cofactor.

Its subcellular location is the cytoplasm. The catalysed reaction is Mo-molybdopterin + GTP + H(+) = Mo-molybdopterin guanine dinucleotide + diphosphate. Transfers a GMP moiety from GTP to Mo-molybdopterin (Mo-MPT) cofactor (Moco or molybdenum cofactor) to form Mo-molybdopterin guanine dinucleotide (Mo-MGD) cofactor. This is Molybdenum cofactor guanylyltransferase from Syntrophotalea carbinolica (strain DSM 2380 / NBRC 103641 / GraBd1) (Pelobacter carbinolicus).